The following is a 347-amino-acid chain: Tyrosine recombinase XerC 2 (347 aa).

Positions 17–108 (LVLTRYMEAH…PLKTWFKWLA (92 aa)) constitute a Core-binding (CB) domain. One can recognise a Tyr recombinase domain in the interval 125-313 (KLPKHLPRAI…SIEHLRAIHD (189 aa)). Active-site residues include Arg-170, Lys-195, His-265, Arg-268, and His-291. Catalysis depends on Tyr-300, which acts as the O-(3'-phospho-DNA)-tyrosine intermediate.

This sequence belongs to the 'phage' integrase family.

It localises to the cytoplasm. Its function is as follows. Site-specific tyrosine recombinase, which acts by catalyzing the cutting and rejoining of the recombining DNA molecules. The chain is Tyrosine recombinase XerC 2 from Ralstonia nicotianae (strain ATCC BAA-1114 / GMI1000) (Ralstonia solanacearum).